The sequence spans 253 residues: DNA repair protein RecO (253 aa).

This sequence belongs to the RecO family.

Its function is as follows. Involved in DNA repair and RecF pathway recombination. This is DNA repair protein RecO from Dehalococcoides mccartyi (strain ATCC BAA-2100 / JCM 16839 / KCTC 5957 / BAV1).